We begin with the raw amino-acid sequence, 562 residues long: Glycine betaine/proline/choline/ectoine transporter VP1456 (562 aa).

Helical transmembrane passes span Pro-68–Glu-88, Phe-110–Leu-130, Val-147–Val-167, Trp-203–Phe-223, Ala-243–Leu-263, Gly-287–Val-307, Met-322–Gly-342, Trp-373–Ala-393, Phe-404–Gly-424, Val-456–Ile-476, Ile-503–Glu-523, and Gly-531–Val-551.

It belongs to the BCCT transporter (TC 2.A.15) family.

It localises to the cell inner membrane. Its function is as follows. Involved in the uptake of osmoprotectants. Can transport glycine betaine, proline, choline and ectoine. This chain is Glycine betaine/proline/choline/ectoine transporter VP1456, found in Vibrio parahaemolyticus serotype O3:K6 (strain RIMD 2210633).